The sequence spans 20 residues: LNPFRWVINKYREWKNKKDS.

S20 bears the Serine amide mark.

In terms of tissue distribution, expressed by the venom gland.

The protein resides in the secreted. In Cupiennius salei (American wandering spider), this protein is Short cationic peptide-6a.